Reading from the N-terminus, the 79-residue chain is Exodeoxyribonuclease 7 small subunit (79 aa).

Belongs to the XseB family. Heterooligomer composed of large and small subunits.

It is found in the cytoplasm. It carries out the reaction Exonucleolytic cleavage in either 5'- to 3'- or 3'- to 5'-direction to yield nucleoside 5'-phosphates.. Functionally, bidirectionally degrades single-stranded DNA into large acid-insoluble oligonucleotides, which are then degraded further into small acid-soluble oligonucleotides. This is Exodeoxyribonuclease 7 small subunit from Geobacillus kaustophilus (strain HTA426).